The chain runs to 187 residues: Large ribosomal subunit protein uL18 (187 aa).

Belongs to the universal ribosomal protein uL18 family. Part of the 50S ribosomal subunit. Interacts with proteins L5 and L21e, and attaches the 5S rRNA to the 23S rRNA. Has been cross-linked to L21e.

In terms of biological role, this is one of 5 proteins that mediate the attachment of the 5S rRNA onto the large ribosomal subunit, where it forms part of the central protuberance and stabilizes the orientation of adjacent RNA domains. The chain is Large ribosomal subunit protein uL18 (rpl18) from Haloarcula marismortui (strain ATCC 43049 / DSM 3752 / JCM 8966 / VKM B-1809) (Halobacterium marismortui).